The chain runs to 96 residues: UPF0235 protein YggU (96 aa).

It belongs to the UPF0235 family.

The chain is UPF0235 protein YggU from Escherichia coli O157:H7.